The primary structure comprises 167 residues: Multifunctional Ser/Thr-tRNA deacylase ProXp-y (167 aa).

It localises to the cytoplasm. It catalyses the reaction L-seryl-tRNA(Lys) + H2O = tRNA(Lys) + L-serine. The enzyme catalyses L-threonyl-tRNA(Lys) + H2O = tRNA(Lys) + L-threonine. It carries out the reaction L-homoseryl-tRNA(Lys) + H2O = tRNA(Lys) + L-homoserine + H(+). The catalysed reaction is L-seryl-tRNA(Ala) + H2O = tRNA(Ala) + L-serine. It catalyses the reaction L-homoseryl-tRNA(Ser) + H2O = tRNA(Ser) + L-homoserine + H(+). The enzyme catalyses L-seryl-tRNA(Thr) + H2O = tRNA(Thr) + L-serine. It carries out the reaction L-threonyl-tRNA(Ile) + H2O = tRNA(Ile) + L-threonine. The catalysed reaction is L-threonyl-tRNA(Val) + H2O = tRNA(Val) + L-threonine. It catalyses the reaction L-threonyl-tRNA(Ser) + H2O = tRNA(Ser) + L-threonine. Functionally, an aminoacyl-tRNA editing enzyme that deacylates Ser-tRNA and/or Thr-tRNA mischarged by lysyl-tRNA synthetase (LysRS), threonyl-tRNA synthetase (ThrRS), seryl-tRNA synthetase (SerRS), alanyl-tRNA synthetase (AlaRS), valyl-tRNA synthetase (ValRS) and isoleucyl-tRNA synthetase (IleRS) in vitro. Also deacylates mischarged Hse-tRNA(Lys) and Hse-tRNA(Ser), and cognate Ser-tRNA(Ser) and Thr-tRNA(Thr) in vitro. The presence of cognate ThrRS abolishes the Thr-tRNA(Thr) deacylase activity, hence this activity is not applicable physiologically. Not able to remove the amino acid moiety from cognate Val-tRNA(Val), Ile-tRNA(Ile), Lys-tRNA(Lys), Ala-tRNA(Ala) or Pro-tRNA(Pro), or from incorrectly charged Ala-tRNA(Pro), Cys-tRNA(Pro) or Leu-tRNA(Pro) in vitro. May be required in vivo to prevent mistranslation and to maintain growth when the error prone stress-inducible lysyl-tRNA synthetase (LysU) is expressed under environmental pressure. This chain is Multifunctional Ser/Thr-tRNA deacylase ProXp-y, found in Escherichia coli O157:H7.